Consider the following 338-residue polypeptide: MAGSHPYFNQPDSTHPSPPSAPPSLRWYQRCQPSDATSGLLVALLGGGLPAGFVGPLSRMAYQASNLPSLELLIWRCLFHLPIALLLKLRGDPLLGTPDIRSRAFFCALLNILSIGCAYSAVQVVPAGNAATVRKGSSTVCSAVLTLCLESQGLSGYDWCGLLGCILGLIIIVGPGLWTLQEGTTGVYTALGYVEAFLGGLALSLRLLVYRSLHFPPCLPTVAFLSGLVGLLGSVPGLFVLQAPVLPSDLLSWSCVGAVGILALVSFTCVGYAVTKAHPALVCAVLHSEVVVALILQYYMLHETVAPSDIVAAGVVLGSIAIITAQNLSCERTGRVEE.

A disordered region spans residues 1-24 (MAGSHPYFNQPDSTHPSPPSAPPS). 9 consecutive transmembrane segments (helical) span residues 37-57 (TSGL…VGPL), 67-87 (LPSL…ALLL), 105-125 (FFCA…VQVV), 160-180 (CGLL…LWTL), 185-205 (TGVY…ALSL), 221-241 (TVAF…LFVL), 250-270 (LLSW…FTCV), 281-301 (LVCA…YYML), and 305-325 (VAPS…IITA). The EamA 1 domain occupies 49 to 174 (LPAGFVGPLS…CILGLIIIVG (126 aa)). Residues 272 to 325 (YAVTKAHPALVCAVLHSEVVVALILQYYMLHETVAPSDIVAAGVVLGSIAIITA) form the EamA 2 domain.

The protein belongs to the SLC35G solute transporter family. As to expression, expressed in testis.

Its subcellular location is the membrane. In Homo sapiens (Human), this protein is Solute carrier family 35 member G3 (SLC35G3).